A 1239-amino-acid polypeptide reads, in one-letter code: Inner tegument protein (1239 aa).

Residues 1–10 are compositionally biased toward low complexity; the sequence is MASAMESDSS. Disordered stretches follow at residues 1 to 20, 672 to 708, and 1090 to 1239; these read MASAMESDSSGGSGGADAQP, GESPQAVGLRPLNLEGEGKAGDAGAEGAEDEEGGGPW, and GRNA…AEDE. The interval 618-1239 is interaction with large tegument protein; it reads NELPKTRSLA…RPPRPTAEDE (622 aa). Residues 1115 to 1126 are compositionally biased toward low complexity; the sequence is DSSPFSFSSSDF. The segment covering 1127–1136 has biased composition (acidic residues); that stretch reads SDQDEGEGGE. A compositionally biased stretch (low complexity) spans 1181-1190; the sequence is RTTPSPSRRA. Basic residues predominate over residues 1219–1232; it reads VRPRTRRGATRRPP.

This sequence belongs to the herpesviridae inner tegument protein family. As to quaternary structure, interacts (via C-terminus) with the large tegument protein/LTP (via N-terminus).

Its subcellular location is the virion tegument. The protein localises to the host cytoplasm. The protein resides in the host nucleus. It is found in the host Golgi apparatus. It localises to the host trans-Golgi network. Its function is as follows. Plays an essential role in cytoplasmic secondary envelopment during viral egress. Interacts with the capsid via the large tegument protein/LTP and participates in its transport to the host trans-Golgi network (TGN) where secondary envelopment occurs. Modulates tegumentation and capsid accumulation at the viral assembly complex. The polypeptide is Inner tegument protein (Homo sapiens (Human)).